Here is a 408-residue protein sequence, read N- to C-terminus: S-adenosylmethionine synthase (408 aa).

His-16 provides a ligand contact to ATP. Asp-18 is a Mg(2+) binding site. Glu-44 contacts K(+). Positions 57 and 100 each coordinate L-methionine. The tract at residues 100–110 (QSPEINQGVSR) is flexible loop. ATP is bound by residues 177-179 (DGK), Asp-257, 263-264 (RK), Ala-280, and Lys-284. Residue Asp-257 coordinates L-methionine. Residue Lys-288 coordinates L-methionine.

It belongs to the AdoMet synthase family. Homotetramer; dimer of dimers. Mg(2+) is required as a cofactor. It depends on K(+) as a cofactor.

It is found in the cytoplasm. The catalysed reaction is L-methionine + ATP + H2O = S-adenosyl-L-methionine + phosphate + diphosphate. The protein operates within amino-acid biosynthesis; S-adenosyl-L-methionine biosynthesis; S-adenosyl-L-methionine from L-methionine: step 1/1. Functionally, catalyzes the formation of S-adenosylmethionine (AdoMet) from methionine and ATP. The overall synthetic reaction is composed of two sequential steps, AdoMet formation and the subsequent tripolyphosphate hydrolysis which occurs prior to release of AdoMet from the enzyme. The sequence is that of S-adenosylmethionine synthase from Bifidobacterium animalis subsp. lactis (strain AD011).